The sequence spans 639 residues: Bone morphogenetic protein 1 homolog (639 aa).

Positions 1-23 (MDLLYYMTVSLLGFILSLTTFIG) are cleaved as a signal peptide. Residues 24–109 (ETTRALSDDV…RAVTARPERR (86 aa)) constitute a propeptide that is removed on maturation. In terms of domain architecture, Peptidase M12A spans 100 to 305 (RAVTARPERR…IQANLLYKCP (206 aa)). N-linked (GlcNAc...) asparagine glycosylation is found at asparagine 122 and asparagine 140. 6 disulfides stabilise this stretch: cysteine 143-cysteine 304, cysteine 167-cysteine 189, cysteine 169-cysteine 170, cysteine 307-cysteine 333, cysteine 360-cysteine 382, and cysteine 420-cysteine 446. Histidine 197 is a Zn(2+) binding site. The active site involves glutamate 198. Histidine 201 and histidine 207 together coordinate Zn(2+). CUB domains follow at residues 307–419 (CGRT…YEAI) and 420–531 (CGGH…DFFK). The N-linked (GlcNAc...) asparagine glycan is linked to asparagine 317. Asparagine 455 carries N-linked (GlcNAc...) asparagine glycosylation. 4 disulfide bridges follow: cysteine 473–cysteine 495, cysteine 536–cysteine 548, cysteine 544–cysteine 557, and cysteine 559–cysteine 572. The EGF-like; calcium-binding domain occupies 532 to 573 (EKDECAQPDQGGCMDVCVNTIGSYRCDCRPGYELSSDGRRCE).

Zn(2+) is required as a cofactor. Ectodermal and primary mesenchyme cells in hatched blastula.

This chain is Bone morphogenetic protein 1 homolog, found in Strongylocentrotus purpuratus (Purple sea urchin).